The following is a 371-amino-acid chain: Aminomethyltransferase (371 aa).

It belongs to the GcvT family. The glycine cleavage system is composed of four proteins: P, T, L and H.

The catalysed reaction is N(6)-[(R)-S(8)-aminomethyldihydrolipoyl]-L-lysyl-[protein] + (6S)-5,6,7,8-tetrahydrofolate = N(6)-[(R)-dihydrolipoyl]-L-lysyl-[protein] + (6R)-5,10-methylene-5,6,7,8-tetrahydrofolate + NH4(+). The glycine cleavage system catalyzes the degradation of glycine. The protein is Aminomethyltransferase of Pectobacterium carotovorum subsp. carotovorum (strain PC1).